The primary structure comprises 221 residues: MKAAVLVFPGSNCDRDLAVAIEKICGTKPLMVWHQESELPDDLDLIAVPGGFSYGDYLRSGAMAARSAVMPAVIKQAERGVPVLGICNGFQILTEAGLLPGALMRNAGLSFICRNVGLEIQNTTSPFLRLYKKNQKIHLPVAHHDGNYTADEATLDQLEDEDRVALRYTESVNGSARNIAGVLNKKGNVLGLMPHPERMIEDAHGGKDGYNMFASLMQVMA.

The Glutamine amidotransferase type-1 domain occupies 3–221 (AAVLVFPGSN…MFASLMQVMA (219 aa)). The active-site Nucleophile is the cysteine 87. Residues histidine 195 and glutamate 197 contribute to the active site.

Part of the FGAM synthase complex composed of 1 PurL, 1 PurQ and 2 PurS subunits.

It is found in the cytoplasm. It carries out the reaction N(2)-formyl-N(1)-(5-phospho-beta-D-ribosyl)glycinamide + L-glutamine + ATP + H2O = 2-formamido-N(1)-(5-O-phospho-beta-D-ribosyl)acetamidine + L-glutamate + ADP + phosphate + H(+). It catalyses the reaction L-glutamine + H2O = L-glutamate + NH4(+). It participates in purine metabolism; IMP biosynthesis via de novo pathway; 5-amino-1-(5-phospho-D-ribosyl)imidazole from N(2)-formyl-N(1)-(5-phospho-D-ribosyl)glycinamide: step 1/2. Functionally, part of the phosphoribosylformylglycinamidine synthase complex involved in the purines biosynthetic pathway. Catalyzes the ATP-dependent conversion of formylglycinamide ribonucleotide (FGAR) and glutamine to yield formylglycinamidine ribonucleotide (FGAM) and glutamate. The FGAM synthase complex is composed of three subunits. PurQ produces an ammonia molecule by converting glutamine to glutamate. PurL transfers the ammonia molecule to FGAR to form FGAM in an ATP-dependent manner. PurS interacts with PurQ and PurL and is thought to assist in the transfer of the ammonia molecule from PurQ to PurL. The polypeptide is Phosphoribosylformylglycinamidine synthase subunit PurQ (Zymomonas mobilis subsp. mobilis (strain ATCC 31821 / ZM4 / CP4)).